We begin with the raw amino-acid sequence, 312 residues long: Ribonuclease Z (312 aa).

Zn(2+)-binding residues include H63, H65, D67, H68, H140, D211, and H269. The active-site Proton acceptor is the D67.

Belongs to the RNase Z family. Homodimer. Requires Zn(2+) as cofactor.

It catalyses the reaction Endonucleolytic cleavage of RNA, removing extra 3' nucleotides from tRNA precursor, generating 3' termini of tRNAs. A 3'-hydroxy group is left at the tRNA terminus and a 5'-phosphoryl group is left at the trailer molecule.. In terms of biological role, zinc phosphodiesterase, which displays some tRNA 3'-processing endonuclease activity. Probably involved in tRNA maturation, by removing a 3'-trailer from precursor tRNA. The sequence is that of Ribonuclease Z from Shouchella clausii (strain KSM-K16) (Alkalihalobacillus clausii).